Consider the following 70-residue polypeptide: Small ribosomal subunit protein bS21 (70 aa).

Belongs to the bacterial ribosomal protein bS21 family.

The sequence is that of Small ribosomal subunit protein bS21 from Sulfurimonas denitrificans (strain ATCC 33889 / DSM 1251) (Thiomicrospira denitrificans (strain ATCC 33889 / DSM 1251)).